The chain runs to 109 residues: Transcription initiation factor IIA subunit 2 (109 aa).

It belongs to the TFIIA subunit 2 family. TFIIA is a heterodimer of the large unprocessed subunit 1 and a small subunit gamma. It was originally believed to be a heterotrimer of an alpha (p35), a beta (p19) and a gamma subunit (p12). Interacts with NCOA6 general coactivator. TFIIA forms a complex with TBP. Interacts with HSF1 (via transactivation domain). Part of TBP-based Pol II pre-initiation complex (PIC), in which Pol II core assembles with general transcription factors and other specific initiation factors including GTF2E1, GTF2E2, GTF2F1, GTF2F2, TCEA1, ERCC2, ERCC3, GTF2H2, GTF2H3, GTF2H4, GTF2H5, GTF2A1, GTF2A2, GTF2B and TBP; this large multi-subunit PIC complex mediates DNA unwinding and targets Pol II core to the transcription start site where the first phosphodiester bond forms.

It localises to the nucleus. TFIIA is a component of the transcription machinery of RNA polymerase II and plays an important role in transcriptional activation. TFIIA in a complex with TBP mediates transcriptional activity. The sequence is that of Transcription initiation factor IIA subunit 2 (Gtf2a2) from Rattus norvegicus (Rat).